The sequence spans 30 residues: Dendrotoxin B (30 aa).

A disulfide bond links C3 and C22.

This sequence belongs to the three-finger toxin family. Short-chain subfamily. Orphan group XI sub-subfamily. Post-translationally, contains 4 disulfide bonds. Expressed by the venom gland.

It localises to the secreted. In terms of biological role, blocks voltage-gated potassium channels (Kv). This is the slowly inactivating phase of potassium efflux which is blocked by this toxin. The chain is Dendrotoxin B from Dendroaspis angusticeps (Eastern green mamba).